The sequence spans 216 residues: Talanin (216 aa).

In terms of tissue distribution, isoform 4 is expressed in placenta, lung, kidney and pancreas.

In terms of biological role, may play a role in uric acid excretion. In Homo sapiens (Human), this protein is Talanin (ZNF365).